The following is a 401-amino-acid chain: Formate-dependent phosphoribosylglycinamide formyltransferase (401 aa).

Residues 22-23 (EL) and Glu-82 each bind N(1)-(5-phospho-beta-D-ribosyl)glycinamide. ATP-binding positions include Arg-115, Lys-157, 162–167 (SSGKGQ), 197–200 (EGFI), and Glu-205. Positions 120-315 (RLAAESLGLP…EFELHARAIL (196 aa)) constitute an ATP-grasp domain. Residues Glu-274 and Glu-286 each coordinate Mg(2+). Residues Asp-293, Lys-362, and 369–370 (RR) each bind N(1)-(5-phospho-beta-D-ribosyl)glycinamide.

Belongs to the PurK/PurT family. As to quaternary structure, homodimer.

The enzyme catalyses N(1)-(5-phospho-beta-D-ribosyl)glycinamide + formate + ATP = N(2)-formyl-N(1)-(5-phospho-beta-D-ribosyl)glycinamide + ADP + phosphate + H(+). It functions in the pathway purine metabolism; IMP biosynthesis via de novo pathway; N(2)-formyl-N(1)-(5-phospho-D-ribosyl)glycinamide from N(1)-(5-phospho-D-ribosyl)glycinamide (formate route): step 1/1. Its function is as follows. Involved in the de novo purine biosynthesis. Catalyzes the transfer of formate to 5-phospho-ribosyl-glycinamide (GAR), producing 5-phospho-ribosyl-N-formylglycinamide (FGAR). Formate is provided by PurU via hydrolysis of 10-formyl-tetrahydrofolate. This Cupriavidus taiwanensis (strain DSM 17343 / BCRC 17206 / CCUG 44338 / CIP 107171 / LMG 19424 / R1) (Ralstonia taiwanensis (strain LMG 19424)) protein is Formate-dependent phosphoribosylglycinamide formyltransferase.